Consider the following 354-residue polypeptide: tRNA N6-adenosine threonylcarbamoyltransferase (354 aa).

Residues H111 and H115 each contribute to the Fe cation site. Substrate is bound by residues 134 to 138 (LVSGG), D167, G180, and N279. Fe cation is bound at residue D319.

Belongs to the KAE1 / TsaD family. It depends on Fe(2+) as a cofactor.

It is found in the cytoplasm. The catalysed reaction is L-threonylcarbamoyladenylate + adenosine(37) in tRNA = N(6)-L-threonylcarbamoyladenosine(37) in tRNA + AMP + H(+). Functionally, required for the formation of a threonylcarbamoyl group on adenosine at position 37 (t(6)A37) in tRNAs that read codons beginning with adenine. Is involved in the transfer of the threonylcarbamoyl moiety of threonylcarbamoyl-AMP (TC-AMP) to the N6 group of A37, together with TsaE and TsaB. TsaD likely plays a direct catalytic role in this reaction. The polypeptide is tRNA N6-adenosine threonylcarbamoyltransferase (Neisseria meningitidis serogroup B (strain ATCC BAA-335 / MC58)).